Here is a 423-residue protein sequence, read N- to C-terminus: Probable sodium/metabolite cotransporter BASS3, chloroplastic (423 aa).

A chloroplast-targeting transit peptide spans 1-45 (MAAAVAASSSSSSSSCAAVGVATASHPHRHRQARFVVSPPAPASP). Transmembrane regions (helical) follow at residues 106-126 (ALLPLVVAATAVAALGNPATF), 138-158 (LGGIMLSIGIKLSIDDFALAF), 165-187 (TIGYMAQYIVKPLMGVLIARAFG), 192-214 (FFAGFVLTCCVSGAQLSSYASFL), 231-251 (ISSVVVTPVLTGLLIGSVVPV), 254-274 (IAMAKSILQVVLVPVTLGLLL), 287-307 (PVMPFVAMLCTSLCIGSPLAI), 318-338 (FLLLLPIVTFHIAAFIVGYWI), and 380-400 (VPAACSVVIMAIFGLTLASYW).

The protein belongs to the bile acid:sodium symporter (BASS) (TC 2.A.28) family.

The protein localises to the membrane. It is found in the plastid. The protein resides in the chloroplast envelope. Functionally, may function as sodium-coupled metabolite transporter across the chloroplast envelope. The sequence is that of Probable sodium/metabolite cotransporter BASS3, chloroplastic (BASS3) from Oryza sativa subsp. japonica (Rice).